Consider the following 83-residue polypeptide: Kappa-actitoxin-Aer3a (83 aa).

A signal peptide spans 1 to 22; sequence MKGQMIICLVLIALCMSVVVMA. A propeptide spanning residues 23–49 is cleaved from the precursor; the sequence is QNLRAEELEKANPKDERVRSFERNQKR. One can recognise a ShKT domain in the interval 51 to 83; the sequence is CKDYLPKSECTQFRCRTSMKYKYTNCKKTCGTC. Disulfide bonds link Cys-51/Cys-83, Cys-60/Cys-76, and Cys-65/Cys-80.

Belongs to the sea anemone type 1 potassium channel toxin family. Type 1a subfamily.

The protein localises to the secreted. It localises to the nematocyst. Its function is as follows. Specifically, dose-dependently and potently blocks the voltage-gated potassium channel Kv1.1/KCNA1 (Ki=1.6 pM). Moderately blocks potassium channel heterotetramers formed by 3 subunits of Kv1.1/KCNA1 and 1 subunit of Kv1.2/KCNA2 (Ki=56 nM) and weakly blocks those formed by 2 subunits of Kv1.1/KCNA1 and 2 subunits of Kv1.2/KCNA2 (Ki=14 nM). The chain is Kappa-actitoxin-Aer3a from Anemonia erythraea (Sea anemone).